The primary structure comprises 671 residues: tRNA(Met) cytidine acetyltransferase TmcA (671 aa).

ATP-binding positions include Gln-180, 202–211, and Arg-319; that span reads GRGKSALAGQ. One can recognise an N-acetyltransferase domain in the interval 349 to 531; it reads IRFSAFTQAL…SGCYTAMALL (183 aa). Residues 461-463, 468-474, Glu-499, and Arg-506 contribute to the acetyl-CoA site; these read IAV and QREGIGQ.

It belongs to the RNA cytidine acetyltransferase family. TmcA subfamily.

Its subcellular location is the cytoplasm. The enzyme catalyses cytidine(34) in elongator tRNA(Met) + acetyl-CoA + ATP + H2O = N(4)-acetylcytidine(34) in elongator tRNA(Met) + ADP + phosphate + CoA + H(+). In terms of biological role, catalyzes the formation of N(4)-acetylcytidine (ac(4)C) at the wobble position of tRNA(Met), by using acetyl-CoA as an acetyl donor and ATP (or GTP). The chain is tRNA(Met) cytidine acetyltransferase TmcA from Citrobacter koseri (strain ATCC BAA-895 / CDC 4225-83 / SGSC4696).